The primary structure comprises 192 residues: Fe/S biogenesis protein NfuA (192 aa).

[4Fe-4S] cluster is bound by residues cysteine 149 and cysteine 152.

This sequence belongs to the NfuA family. Homodimer. It depends on [4Fe-4S] cluster as a cofactor.

Its function is as follows. Involved in iron-sulfur cluster biogenesis. Binds a 4Fe-4S cluster, can transfer this cluster to apoproteins, and thereby intervenes in the maturation of Fe/S proteins. Could also act as a scaffold/chaperone for damaged Fe/S proteins. The polypeptide is Fe/S biogenesis protein NfuA (Shewanella baltica (strain OS223)).